Consider the following 262-residue polypeptide: Shikimate dehydrogenase (NADP(+)) (262 aa).

Residues 13 to 15 (SLS) and Thr59 each bind shikimate. Residue Lys63 is the Proton acceptor of the active site. An NADP(+)-binding site is contributed by Asp75. Shikimate is bound by residues Asn84 and Asp99. NADP(+) contacts are provided by residues 122 to 126 (GAGGA), 144 to 149 (NRTLEK), and Met205. Shikimate is bound at residue Tyr207. Gly228 lines the NADP(+) pocket.

Belongs to the shikimate dehydrogenase family. As to quaternary structure, homodimer.

The enzyme catalyses shikimate + NADP(+) = 3-dehydroshikimate + NADPH + H(+). The protein operates within metabolic intermediate biosynthesis; chorismate biosynthesis; chorismate from D-erythrose 4-phosphate and phosphoenolpyruvate: step 4/7. In terms of biological role, involved in the biosynthesis of the chorismate, which leads to the biosynthesis of aromatic amino acids. Catalyzes the reversible NADPH linked reduction of 3-dehydroshikimate (DHSA) to yield shikimate (SA). The sequence is that of Shikimate dehydrogenase (NADP(+)) from Ignicoccus hospitalis (strain KIN4/I / DSM 18386 / JCM 14125).